The sequence spans 246 residues: 4-hydroxy-tetrahydrodipicolinate reductase (246 aa).

NAD(+) is bound at residue 7–12 (GCSGRM). Arg34 lines the NADP(+) pocket. NAD(+) is bound by residues 76 to 78 (ATT) and 102 to 105 (CPNT). Catalysis depends on His135, which acts as the Proton donor/acceptor. Residue His136 participates in (S)-2,3,4,5-tetrahydrodipicolinate binding. Lys139 functions as the Proton donor in the catalytic mechanism. Residue 145–146 (GT) participates in (S)-2,3,4,5-tetrahydrodipicolinate binding.

Belongs to the DapB family.

The protein resides in the cytoplasm. It carries out the reaction (S)-2,3,4,5-tetrahydrodipicolinate + NAD(+) + H2O = (2S,4S)-4-hydroxy-2,3,4,5-tetrahydrodipicolinate + NADH + H(+). The catalysed reaction is (S)-2,3,4,5-tetrahydrodipicolinate + NADP(+) + H2O = (2S,4S)-4-hydroxy-2,3,4,5-tetrahydrodipicolinate + NADPH + H(+). The protein operates within amino-acid biosynthesis; L-lysine biosynthesis via DAP pathway; (S)-tetrahydrodipicolinate from L-aspartate: step 4/4. Its function is as follows. Catalyzes the conversion of 4-hydroxy-tetrahydrodipicolinate (HTPA) to tetrahydrodipicolinate. The polypeptide is 4-hydroxy-tetrahydrodipicolinate reductase (Chlamydia abortus (strain DSM 27085 / S26/3) (Chlamydophila abortus)).